The primary structure comprises 238 residues: Ribonuclease PH (238 aa).

Residues Arg86 and 124–126 (GTR) contribute to the phosphate site.

It belongs to the RNase PH family. Homohexameric ring arranged as a trimer of dimers.

The enzyme catalyses tRNA(n+1) + phosphate = tRNA(n) + a ribonucleoside 5'-diphosphate. In terms of biological role, phosphorolytic 3'-5' exoribonuclease that plays an important role in tRNA 3'-end maturation. Removes nucleotide residues following the 3'-CCA terminus of tRNAs; can also add nucleotides to the ends of RNA molecules by using nucleoside diphosphates as substrates, but this may not be physiologically important. Probably plays a role in initiation of 16S rRNA degradation (leading to ribosome degradation) during starvation. The polypeptide is Ribonuclease PH (Vibrio vulnificus (strain CMCP6)).